The chain runs to 215 residues: Ribose-5-phosphate isomerase A (215 aa).

Substrate is bound by residues 26–29, 79–82, and 92–95; these read TGST, DGAD, and KGGG. Glu-101 (proton acceptor) is an active-site residue. Substrate is bound at residue Lys-119.

The protein belongs to the ribose 5-phosphate isomerase family. Homodimer.

The enzyme catalyses aldehydo-D-ribose 5-phosphate = D-ribulose 5-phosphate. The protein operates within carbohydrate degradation; pentose phosphate pathway; D-ribose 5-phosphate from D-ribulose 5-phosphate (non-oxidative stage): step 1/1. Catalyzes the reversible conversion of ribose-5-phosphate to ribulose 5-phosphate. In Xanthomonas oryzae pv. oryzae (strain MAFF 311018), this protein is Ribose-5-phosphate isomerase A.